Consider the following 198-residue polypeptide: Urease accessory protein UreE (198 aa).

Positions 137 to 198 are disordered; that stretch reads ARGAYHSPGG…RGHDHDHKHD (62 aa). Over residues 149-198 the composition is skewed to basic and acidic residues; the sequence is HGHDHDHNHDHGHDHAHDHNHGHDHDHEHGYEHEHEHRHDRGHDHDHKHD.

This sequence belongs to the UreE family.

It is found in the cytoplasm. Its function is as follows. Involved in urease metallocenter assembly. Binds nickel. Probably functions as a nickel donor during metallocenter assembly. The polypeptide is Urease accessory protein UreE (Rhizobium johnstonii (strain DSM 114642 / LMG 32736 / 3841) (Rhizobium leguminosarum bv. viciae)).